The chain runs to 156 residues: ATP synthase subunit b (156 aa).

Residues V12–A32 form a helical membrane-spanning segment.

This sequence belongs to the ATPase B chain family. In terms of assembly, F-type ATPases have 2 components, F(1) - the catalytic core - and F(0) - the membrane proton channel. F(1) has five subunits: alpha(3), beta(3), gamma(1), delta(1), epsilon(1). F(0) has three main subunits: a(1), b(2) and c(10-14). The alpha and beta chains form an alternating ring which encloses part of the gamma chain. F(1) is attached to F(0) by a central stalk formed by the gamma and epsilon chains, while a peripheral stalk is formed by the delta and b chains.

Its subcellular location is the cell inner membrane. Its function is as follows. F(1)F(0) ATP synthase produces ATP from ADP in the presence of a proton or sodium gradient. F-type ATPases consist of two structural domains, F(1) containing the extramembraneous catalytic core and F(0) containing the membrane proton channel, linked together by a central stalk and a peripheral stalk. During catalysis, ATP synthesis in the catalytic domain of F(1) is coupled via a rotary mechanism of the central stalk subunits to proton translocation. Component of the F(0) channel, it forms part of the peripheral stalk, linking F(1) to F(0). The chain is ATP synthase subunit b from Pseudomonas putida (strain ATCC 47054 / DSM 6125 / CFBP 8728 / NCIMB 11950 / KT2440).